Reading from the N-terminus, the 832-residue chain is Putative pentatricopeptide repeat-containing protein At5g08310, mitochondrial (832 aa).

A mitochondrion-targeting transit peptide spans 1 to 27 (MAFSRIALLCQRFSRQQQQRQLLHRPL). PPR repeat units follow at residues 105-139 (DMYA…RCFM), 140-174 (SPGA…GLCV), 176-212 (NAYT…GFHF), 213-247 (DKFT…GWLD), 252-281 (TILV…DIRL), 282-316 (NYKT…GMNA), 317-351 (DIAL…GIPP), 352-383 (DRGI…IDKK), 385-415 (VMLL…LMGN), 438-472 (DSDS…GLIP), 473-507 (GPMM…GVEP), 508-542 (SQFT…GFEP), 543-577 (WIKH…GFLG), 578-612 (HMVA…GHCP), 613-647 (DVIA…GLKP), 648-682 (TVAT…EKNP), 683-717 (DVIT…DCYP), 718-752 (NRIT…EMEP), and 753-787 (DSAV…GRFP).

It belongs to the PPR family. P subfamily.

The protein localises to the mitochondrion. The sequence is that of Putative pentatricopeptide repeat-containing protein At5g08310, mitochondrial from Arabidopsis thaliana (Mouse-ear cress).